A 462-amino-acid chain; its full sequence is tRNA-2-methylthio-N(6)-dimethylallyladenosine synthase (462 aa).

The 116-residue stretch at 2–117 (KRYFIHTFGC…LPDIIGRVSA (116 aa)) folds into the MTTase N-terminal domain. [4Fe-4S] cluster contacts are provided by C11, C47, C80, C157, C161, and C164. A Radical SAM core domain is found at 143–372 (SRGKVTEFVT…QKLQRRISGE (230 aa)). Residues 375–437 (AALVGSEVEV…PNQLAGKQVA (63 aa)) enclose the TRAM domain.

The protein belongs to the methylthiotransferase family. MiaB subfamily. Monomer. Requires [4Fe-4S] cluster as cofactor.

Its subcellular location is the cytoplasm. The catalysed reaction is N(6)-dimethylallyladenosine(37) in tRNA + (sulfur carrier)-SH + AH2 + 2 S-adenosyl-L-methionine = 2-methylsulfanyl-N(6)-dimethylallyladenosine(37) in tRNA + (sulfur carrier)-H + 5'-deoxyadenosine + L-methionine + A + S-adenosyl-L-homocysteine + 2 H(+). Functionally, catalyzes the methylthiolation of N6-(dimethylallyl)adenosine (i(6)A), leading to the formation of 2-methylthio-N6-(dimethylallyl)adenosine (ms(2)i(6)A) at position 37 in tRNAs that read codons beginning with uridine. This chain is tRNA-2-methylthio-N(6)-dimethylallyladenosine synthase, found in Myxococcus xanthus (strain DK1622).